The chain runs to 245 residues: 1-(5-phosphoribosyl)-5-[(5-phosphoribosylamino)methylideneamino] imidazole-4-carboxamide isomerase (245 aa).

Aspartate 7 (proton acceptor) is an active-site residue. Aspartate 129 (proton donor) is an active-site residue.

It belongs to the HisA/HisF family.

The protein localises to the cytoplasm. It carries out the reaction 1-(5-phospho-beta-D-ribosyl)-5-[(5-phospho-beta-D-ribosylamino)methylideneamino]imidazole-4-carboxamide = 5-[(5-phospho-1-deoxy-D-ribulos-1-ylimino)methylamino]-1-(5-phospho-beta-D-ribosyl)imidazole-4-carboxamide. It functions in the pathway amino-acid biosynthesis; L-histidine biosynthesis; L-histidine from 5-phospho-alpha-D-ribose 1-diphosphate: step 4/9. This Escherichia coli (strain ATCC 8739 / DSM 1576 / NBRC 3972 / NCIMB 8545 / WDCM 00012 / Crooks) protein is 1-(5-phosphoribosyl)-5-[(5-phosphoribosylamino)methylideneamino] imidazole-4-carboxamide isomerase.